Reading from the N-terminus, the 431-residue chain is Peroxisomal biogenesis factor 3 (431 aa).

At 1–10 (MDFFRRHQKK) the chain is on the peroxisomal side. The chain crosses the membrane as a helical span at residues 11-28 (VLALVGVALSSYLFIDYV). The Cytoplasmic portion of the chain corresponds to 29 to 431 (KKKFFEIQGR…VVYSSFDWAL (403 aa)). Residues 95 to 126 (TDRVLALESSTSSSATAQTVPTMTSGATEEGE) are disordered. Residues 112–121 (QTVPTMTSGA) are compositionally biased toward polar residues.

This sequence belongs to the peroxin-3 family.

It is found in the peroxisome membrane. Its function is as follows. Involved in peroxisome biosynthesis. Seems to directly or indirectly sequesters components of the peroxisome biogenesis machinery. The sequence is that of Peroxisomal biogenesis factor 3 (PEX3) from Yarrowia lipolytica (strain CLIB 122 / E 150) (Yeast).